Reading from the N-terminus, the 308-residue chain is Glycine betaine uptake system ATP-binding protein YehX (308 aa).

Positions 2-235 (IEFSHVSKLF…PANDFVRQFF (234 aa)) constitute an ABC transporter domain. Residue 34–41 (GTSGSGKS) participates in ATP binding.

This sequence belongs to the ABC transporter superfamily. The complex is composed of two ATP-binding proteins (YehX), two transmembrane proteins (YehW and YehY) and a solute-binding protein (YehZ).

The enzyme catalyses glycine betaine(out) + ATP + H2O = glycine betaine(in) + ADP + phosphate + H(+). Part of an ABC transporter complex involved in low-affinity glycine betaine uptake. Probably responsible for energy coupling to the transport system. This is Glycine betaine uptake system ATP-binding protein YehX (yehX) from Escherichia coli (strain K12).